The primary structure comprises 322 residues: Probable heme-iron transport system permease protein IsdF (322 aa).

A run of 9 helical transmembrane segments spans residues 9-29, 61-81, 89-109, 114-134, 143-163, 179-199, 233-253, 267-287, and 294-314; these read LLFLCLLVILIATAYISFVTG, ILIALMVGAMLAVSGALLQAA, ANIIGVSSGALIMRALCMLFI, FYLPLLSFIGGLIPFLIIIVL, VSMILVGVALFVLLNGVLEIL, IWSDVYILAVSALLGLILTLL, VFLASATVAIVGQLAFLGIIV, VLIPFSTVIGAWLLLVADLLG, and LEIPANAILMIVGGPMLIYLI.

It belongs to the binding-protein-dependent transport system permease family. FecCD subfamily.

The protein localises to the cell membrane. Part of the binding-protein-dependent transport system for heme-iron. Responsible for the translocation of the substrate across the membrane. In Staphylococcus aureus (strain bovine RF122 / ET3-1), this protein is Probable heme-iron transport system permease protein IsdF (isdF).